The following is a 135-amino-acid chain: uncharacterized protein (135 aa).

Residues 4 to 129 enclose the VOC domain; that stretch reads SIVHIALVVN…YGNLWDLLQL (126 aa).

This sequence to B.subtilis YwkD.

This is an uncharacterized protein from Shewanella frigidimarina (strain NCIMB 400).